The chain runs to 156 residues: MPRRREVPKRDILPDPKFGNVDVAKFVNVLMLSGKKSVAENIIYGAFEHIQTKSGKDPLEVFTAAILNCKPLVEVKSRRVGGANYQVPVEVRPVRRMALSMRWLREAANKRSEKSMPQRLAGELLEAAESRGGAMKKRDEVHRMAEANKAFSHFRF.

The protein belongs to the universal ribosomal protein uS7 family. Part of the 30S ribosomal subunit. Contacts proteins S9 and S11.

Its function is as follows. One of the primary rRNA binding proteins, it binds directly to 16S rRNA where it nucleates assembly of the head domain of the 30S subunit. Is located at the subunit interface close to the decoding center, probably blocks exit of the E-site tRNA. This chain is Small ribosomal subunit protein uS7, found in Herminiimonas arsenicoxydans.